Here is a 507-residue protein sequence, read N- to C-terminus: ATP synthase subunit alpha (507 aa).

Position 169–176 (169–176 (GDRQTGKT)) interacts with ATP.

Belongs to the ATPase alpha/beta chains family. As to quaternary structure, F-type ATPases have 2 components, CF(1) - the catalytic core - and CF(0) - the membrane proton channel. CF(1) has five subunits: alpha(3), beta(3), gamma(1), delta(1), epsilon(1). CF(0) has three main subunits: a(1), b(2) and c(9-12). The alpha and beta chains form an alternating ring which encloses part of the gamma chain. CF(1) is attached to CF(0) by a central stalk formed by the gamma and epsilon chains, while a peripheral stalk is formed by the delta and b chains.

Its subcellular location is the cell inner membrane. It carries out the reaction ATP + H2O + 4 H(+)(in) = ADP + phosphate + 5 H(+)(out). In terms of biological role, produces ATP from ADP in the presence of a proton gradient across the membrane. The alpha chain is a regulatory subunit. This chain is ATP synthase subunit alpha, found in Magnetococcus marinus (strain ATCC BAA-1437 / JCM 17883 / MC-1).